Reading from the N-terminus, the 585-residue chain is Regulator of gene activity (585 aa).

The span at 42-56 shows a compositional bias: polar residues; it reads FQTDFANSYPGTANY. 3 disordered regions span residues 42 to 93, 148 to 191, and 349 to 394; these read FQTD…GNRN, GGGG…PGSK, and GVGG…KVTN. The span at 58–71 shows a compositional bias: low complexity; the sequence is QAPQQQQQQQQQPQ. Residues 166–184 show a composition bias toward polar residues; that stretch reads PSLTNARGQNDQTLPQSNP. Residues 349–367 show a composition bias toward gly residues; the sequence is GVGGGLGSGSGSSGSGAGG. The span at 372–388 shows a compositional bias: polar residues; that stretch reads DNSSNDKLVKSGVQTSP.

This sequence belongs to the CNOT2/3/5 family. Component of the CCR4-NOT complex composed of at least Pop2/Caf1-55, Ccr4, Not1, Rga/Not2, and Not3. In terms of tissue distribution, expressed in heterogeneous levels between adjacent germline stem cells (at protein level).

The protein resides in the cytoplasm. Functionally, component of the CCR4-NOT complex which is one of the major cellular mRNA deadenylases and is linked to various cellular processes including bulk mRNA degradation, miRNA-mediated repression, translational repression during translational initiation and general transcription regulation. Additional complex functions may be a consequence of its influence on mRNA expression. Essential for viability. Acts as a suppressor of position effect variegation (PEV) at the white locus and regulates the expression of several unrelated genes. Plays a role in germline stem cell differentiation in the ovaries. In Drosophila melanogaster (Fruit fly), this protein is Regulator of gene activity.